A 275-amino-acid polypeptide reads, in one-letter code: Membrane protein insertase YidC 1 (275 aa).

The first 25 residues, 1 to 25, serve as a signal peptide directing secretion; that stretch reads MRKVLRVKKNIKIARIVPLVLLLVA. C26 carries the N-palmitoyl cysteine lipid modification. A lipid anchor (S-diacylglycerol cysteine) is attached at C26. 5 helical membrane-spanning segments follow: residues 58–78, 129–149, 171–191, 198–216, and 222–240; these read SIGV…MPLF, YASL…FQAL, LYLL…LTNL, VMMT…FMGF, and VVLY…LLLL.

Belongs to the OXA1/ALB3/YidC family. Type 2 subfamily.

It is found in the cell membrane. In terms of biological role, required for the insertion and/or proper folding and/or complex formation of integral membrane proteins into the membrane. Involved in integration of membrane proteins that insert both dependently and independently of the Sec translocase complex, as well as at least some lipoproteins. The polypeptide is Membrane protein insertase YidC 1 (Streptococcus pyogenes serotype M1).